The sequence spans 100 residues: C-X-C motif chemokine 3 (100 aa).

Residues 1–31 (MAPPTCRLLSAALVLLLLLATNHQATGAVVA) form the signal peptide. 2 disulfide bridges follow: Cys-36–Cys-62 and Cys-38–Cys-78.

The protein belongs to the intercrine alpha (chemokine CxC) family.

It localises to the secreted. Its function is as follows. Ligand for CXCR2. Has chemotactic activity for neutrophils. May play a role in inflammation and exert its effects on endothelial cells in an autocrine fashion. The sequence is that of C-X-C motif chemokine 3 from Mus musculus (Mouse).